The sequence spans 237 residues: MVLQYPQNKILVLSDHPHNFLKTQFLQDLFHCSSTGISIVKDQTWENRYYKVHFDLYIDSCKEIPVWVEEFITPECEPLRNVMAGIILITDIRQTKPQELLHQFMIAAHRNTFVVLANVNEEVEQDEIDELNEIWSNAFTNVIEFVNWKRSKPTVNHNDYGEKLGLDRIQEIIDTHDWLNCEVQPATKIREEIPNEMPLEQIIRNLQSARLKYKSIENSSEADAFANEMADELSRYL.

This sequence belongs to the IRC6 family.

In terms of biological role, involved in gross chromosomal rearrangements (GCRs) and telomere healing. This is Increased recombination centers protein 6 (IRC6) from Saccharomyces cerevisiae (strain ATCC 204508 / S288c) (Baker's yeast).